A 76-amino-acid polypeptide reads, in one-letter code: Pigment-dispersing hormone A peptides (76 aa).

An N-terminal signal peptide occupies residues Met1–Ala20. Position 73 is an alanine amide (Ala73).

Belongs to the arthropod PDH family. Optical ganglia of the eyestalk.

The protein localises to the secreted. The pigment-dispersing hormone causes the migration of the distal retinal pigment into the proximal end of the pigment chromatophore cells and thus decreases the amount of light entering the retinulas. May also function as a neurotransmitter and/or neuromodulator. The chain is Pigment-dispersing hormone A peptides from Faxonius limosus (Spinycheek crayfish).